The following is a 1372-amino-acid chain: DNA-directed RNA polymerase subunit beta' (1372 aa).

Residues C69, C71, C84, and C87 each coordinate Zn(2+). Residues D460, D462, and D464 each contribute to the Mg(2+) site. The Zn(2+) site is built by C808, C882, C889, and C892.

It belongs to the RNA polymerase beta' chain family. The RNAP catalytic core consists of 2 alpha, 1 beta, 1 beta' and 1 omega subunit. When a sigma factor is associated with the core the holoenzyme is formed, which can initiate transcription. The cofactor is Mg(2+). Zn(2+) serves as cofactor.

The catalysed reaction is RNA(n) + a ribonucleoside 5'-triphosphate = RNA(n+1) + diphosphate. In terms of biological role, DNA-dependent RNA polymerase catalyzes the transcription of DNA into RNA using the four ribonucleoside triphosphates as substrates. This chain is DNA-directed RNA polymerase subunit beta', found in Rickettsia felis (strain ATCC VR-1525 / URRWXCal2) (Rickettsia azadi).